Consider the following 255-residue polypeptide: Indole-3-glycerol phosphate synthase (255 aa).

This sequence belongs to the TrpC family.

The enzyme catalyses 1-(2-carboxyphenylamino)-1-deoxy-D-ribulose 5-phosphate + H(+) = (1S,2R)-1-C-(indol-3-yl)glycerol 3-phosphate + CO2 + H2O. It functions in the pathway amino-acid biosynthesis; L-tryptophan biosynthesis; L-tryptophan from chorismate: step 4/5. This chain is Indole-3-glycerol phosphate synthase, found in Streptococcus pneumoniae (strain 70585).